Consider the following 209-residue polypeptide: 3-demethoxyubiquinol 3-hydroxylase (209 aa).

Fe cation contacts are provided by Glu-58, Glu-88, His-91, Glu-140, Glu-172, and His-175.

This sequence belongs to the COQ7 family. Fe cation is required as a cofactor.

It is found in the cell membrane. The catalysed reaction is a 5-methoxy-2-methyl-3-(all-trans-polyprenyl)benzene-1,4-diol + AH2 + O2 = a 3-demethylubiquinol + A + H2O. The protein operates within cofactor biosynthesis; ubiquinone biosynthesis. Functionally, catalyzes the hydroxylation of 2-nonaprenyl-3-methyl-6-methoxy-1,4-benzoquinol during ubiquinone biosynthesis. This is 3-demethoxyubiquinol 3-hydroxylase from Polynucleobacter necessarius subsp. necessarius (strain STIR1).